Here is a 153-residue protein sequence, read N- to C-terminus: Ubiquitin-conjugating enzyme E2 ubc-18 (153 aa).

Residues 2–149 form the UBC core domain; sequence SATRRLQKEL…AEEHTRKHAE (148 aa). The active-site Glycyl thioester intermediate is the Cys86.

Belongs to the ubiquitin-conjugating enzyme family. As to quaternary structure, interacts with E3 ubiquitin-protein ligase wwp-1. Interacts with RBR-type E3 ubiquitin transferase ari-1.1. Expressed in neurons localized in the head and tail of adults.

It carries out the reaction S-ubiquitinyl-[E1 ubiquitin-activating enzyme]-L-cysteine + [E2 ubiquitin-conjugating enzyme]-L-cysteine = [E1 ubiquitin-activating enzyme]-L-cysteine + S-ubiquitinyl-[E2 ubiquitin-conjugating enzyme]-L-cysteine.. Ubiquitin-conjugating enzyme E2. Accepts ubiquitin from the E1 complex and catalyzes its covalent attachment to other proteins. Required for diet restriction-mediated lifespan extension, probably acting as part of a complex with ubiquitin-protein ligase wwp-1. Acts redundantly with lin-35/Rb in the regulation of pharyngeal morphogenesis during embryonic development by negatively regulating the expression of proteins such as sup-35. The sequence is that of Ubiquitin-conjugating enzyme E2 ubc-18 from Caenorhabditis elegans.